The primary structure comprises 548 residues: Synaptic vesicle 2-related protein (548 aa).

Residues 1–87 (MEEDLFQLRQ…GFGKFQWKLS (87 aa)) are Cytoplasmic-facing. A phosphoserine mark is found at S25 and S31. A helical transmembrane segment spans residues 88-108 (VLTGLAWMADAMEMMILSILA). Topologically, residues 109–122 (PQLHCEWRLPSWQV) are vesicular. The helical transmembrane segment at 123 to 143 (ALLTSVVFVGMMSSSTLWGNI) threads the bilayer. Residues 144 to 156 (SDQYGRKTGLKIS) are Cytoplasmic-facing. The chain crosses the membrane as a helical span at residues 157-177 (VLWTLYYGILSAFAPVYSWIL). Topologically, residues 178–180 (VLR) are vesicular. A helical membrane pass occupies residues 181–201 (GLVGFGIGGVPQSVTLYAEFL). At 202–209 (PMKARAKC) the chain is on the cytoplasmic side. Residues 210–230 (ILLIEVFWAIGTVFEVVLAVF) traverse the membrane as a helical segment. At 231-238 (VMPSLGWR) the chain is on the vesicular side. The chain crosses the membrane as a helical span at residues 239 to 259 (WLLILSAVPLLLFAVLCFWLP). Topologically, residues 260–316 (ESARYDVLSGNQEKAIATLKRIATENGAPMPLGKLIISRQEDRGKMRDLFTPHFRWT) are cytoplasmic. The helical transmembrane segment at 317–337 (TLLLWFIWFSNAFSYYGLVLL) threads the bilayer. Topologically, residues 338–373 (TTELFQAGDVCGISSRKKAVEAKCSLACEYLSEEDY) are vesicular. A helical membrane pass occupies residues 374-394 (MDLLWTTLSEFPGVLVTLWII). Over 395–401 (DRLGRKK) the chain is Cytoplasmic. Residues 402 to 422 (TMALCFVIFSFCSLLLFICVG) form a helical membrane-spanning segment. Residues 423-424 (RN) are Vesicular-facing. Residues 425–445 (VLTLLLFIARAFISGGFQAAY) form a helical membrane-spanning segment. The Cytoplasmic segment spans residues 446–457 (VYTPEVYPTATR). The helical transmembrane segment at 458 to 478 (ALGLGTCSGMARVGALITPFI) threads the bilayer. At 479–489 (AQVMLESSVYL) the chain is on the vesicular side. The chain crosses the membrane as a helical span at residues 490–510 (TLAVYSGCCLLAALASCFLPI). Topologically, residues 511–548 (ETKGRGLQESSHREWGQEMVGRGMHGADVTRSNSGSQE) are cytoplasmic. S542 bears the Phosphoserine mark.

It belongs to the major facilitator superfamily.

Its subcellular location is the cytoplasmic vesicle. The protein resides in the secretory vesicle. The protein localises to the synaptic vesicle membrane. The chain is Synaptic vesicle 2-related protein (SVOP) from Pongo abelii (Sumatran orangutan).